The primary structure comprises 470 residues: Dihydrolipoyl dehydrogenase (470 aa).

FAD is bound by residues 39 to 47 (EKGNLGGVC), Lys-56, and Ala-119. Cys-47 and Cys-52 are oxidised to a cystine. NAD(+)-binding positions include 183-187 (GGGYI), Glu-206, and 271-274 (TVGR). FAD-binding residues include Asp-314 and Ala-322. Residue His-446 is the Proton acceptor of the active site.

The protein belongs to the class-I pyridine nucleotide-disulfide oxidoreductase family. In terms of assembly, homodimer. Identified in a complex with PdhC. FAD serves as cofactor.

The protein resides in the cytoplasm. It catalyses the reaction N(6)-[(R)-dihydrolipoyl]-L-lysyl-[protein] + NAD(+) = N(6)-[(R)-lipoyl]-L-lysyl-[protein] + NADH + H(+). Functionally, lipoamide dehydrogenase is a component of the alpha-ketoacid dehydrogenase complexes. The polypeptide is Dihydrolipoyl dehydrogenase (pdhD) (Geobacillus stearothermophilus (Bacillus stearothermophilus)).